Reading from the N-terminus, the 914-residue chain is Penicillin-binding protein 1A/1B (914 aa).

Positions 1–29 are disordered; that stretch reads MSDQFNSREARRKANSKSSPSPKKGKKRK. The Cytoplasmic portion of the chain corresponds to 1-37; it reads MSDQFNSREARRKANSKSSPSPKKGKKRKKGGLFKKT. Residues 38 to 58 form a helical; Signal-anchor for type II membrane protein membrane-spanning segment; sequence LFTLLILFVLGVVGGAVTFAV. At 59 to 914 the chain is on the extracellular side; that stretch reads MVSDAPSLDE…TNSSSIEKTN (856 aa). The transglycosylase stretch occupies residues 77–246; sequence STIYDKNGKE…TAYNPVKNPD (170 aa). Glutamate 115 functions as the Proton donor; for transglycosylase activity in the catalytic mechanism. The segment at 329–662 is transpeptidase; the sequence is TKAQDKLDEL…PDSVVEATVE (334 aa). Catalysis depends on serine 390, which acts as the Acyl-ester intermediate; for transpeptidase activity. One can recognise a Fibronectin type-III domain in the interval 708 to 795; that stretch reads KLSGLNVKYD…SYEVPKAEDD (88 aa). The disordered stretch occupies residues 773–914; that stretch reads TAVSDDGKST…TNSSSIEKTN (142 aa). The segment covering 798 to 828 has biased composition (basic and acidic residues); sequence KKDQQQTDDEKQDDEKTQDDTQTDDSQKDDG. Acidic residues predominate over residues 829–840; sequence QTDQDQTDDSTN. Low complexity-rich tracts occupy residues 848–892 and 900–914; these read NTNT…GSDT and SNKTQTNSSSIEKTN.

The protein in the N-terminal section; belongs to the glycosyltransferase 51 family. It in the C-terminal section; belongs to the transpeptidase family. The product expressed from the translation of the ponA gene appears as two bands on a gel (1A and 1B), but the specific amino acid sequence of each protein is unknown. Post-translationally, the N-terminus is blocked.

The protein resides in the cell membrane. The protein localises to the forespore inner membrane. The catalysed reaction is [GlcNAc-(1-&gt;4)-Mur2Ac(oyl-L-Ala-gamma-D-Glu-L-Lys-D-Ala-D-Ala)](n)-di-trans,octa-cis-undecaprenyl diphosphate + beta-D-GlcNAc-(1-&gt;4)-Mur2Ac(oyl-L-Ala-gamma-D-Glu-L-Lys-D-Ala-D-Ala)-di-trans,octa-cis-undecaprenyl diphosphate = [GlcNAc-(1-&gt;4)-Mur2Ac(oyl-L-Ala-gamma-D-Glu-L-Lys-D-Ala-D-Ala)](n+1)-di-trans,octa-cis-undecaprenyl diphosphate + di-trans,octa-cis-undecaprenyl diphosphate + H(+). The enzyme catalyses Preferential cleavage: (Ac)2-L-Lys-D-Ala-|-D-Ala. Also transpeptidation of peptidyl-alanyl moieties that are N-acyl substituents of D-alanine.. It participates in cell wall biogenesis; peptidoglycan biosynthesis. Its function is as follows. Cell wall formation. Synthesis of cross-linked peptidoglycan from the lipid intermediates. The enzyme has a penicillin-insensitive transglycosylase N-terminal domain (formation of linear glycan strands) and a penicillin-sensitive transpeptidase C-terminal domain (cross-linking of the peptide subunits). Required for vegetative growth. Has a partially redundant function with PBP-2A (pbpA) during spore outgrowth. The chain is Penicillin-binding protein 1A/1B (ponA) from Bacillus subtilis (strain 168).